The primary structure comprises 486 residues: Protein kinase C and casein kinase substrate in neurons protein 2 (486 aa).

Positions 11-282 (VEVSSDSFWE…SIKAADAVED (272 aa)) constitute an F-BAR domain. The stretch at 25–274 (KRTVKRIDDG…TIYRELEQSI (250 aa)) forms a coiled coil. Residue Lys53 is modified to N6-acetyllysine. Ser273 is subject to Phosphoserine. Phosphoserine; by PKC is present on Ser313. Positions 315–426 (REKKKAVDGV…NPFDEDTTSG (112 aa)) are disordered. Polar residues predominate over residues 327–362 (TGINQTGDQSGQNKPGSNLSVPSNPAQSTQLQSSYN). The NPF1 motif lies at 362–364 (NPF). Ser373 is subject to Phosphoserine; by IKKB. Residues 384 to 396 (NVSSYEKTQTYPT) show a composition bias toward polar residues. Position 399 is a phosphoserine (Ser399). Over residues 404-416 (NNPFSSTDANGDS) the composition is skewed to polar residues. An NPF2 motif is present at residues 405-407 (NPF). The short motif at 417 to 419 (NPF) is the NPF3 element. Residues 426–486 (GTEVRVRALY…YPANYVEAIQ (61 aa)) form the SH3 domain. The residue at position 446 (Ser446) is a Phosphoserine.

This sequence belongs to the PACSIN family. Homodimer. May form heterooligomers with other PACSINs. Interacts (via NPF motifs) with EHD1 (via EH domain). Interacts (via NPF motifs) with EHD2 (via EH domain); this interaction probably stabilizes the caveolae. Interacts with EHD3. Interacts (via the SH3 domain) with MICALL1. Interacts with RAC1. Interacts (via SH3 domain) with DNM1, SYN1, SYNJ1 and WASL. Interacts (via F-BAR domain) with CAV1; this interaction induces membrane tubulation. Interacts with TRPV4. Forms a complex with EHD4 and MICALL1; the complex controls CDH5 trafficking and coordinates angiogenesis. Post-translationally, phosphorylated by casein kinase 2 (CK2). Phosphorylation by PKC probably decreases the membrane binding and tubulation capacities of PACSIN2, thereby modulating the lifetime of caveolae. In terms of tissue distribution, widely expressed (at protein level).

The protein resides in the cytoplasm. It is found in the cytoskeleton. The protein localises to the cytoplasmic vesicle membrane. It localises to the cell projection. Its subcellular location is the ruffle membrane. The protein resides in the early endosome. It is found in the recycling endosome membrane. The protein localises to the cell membrane. It localises to the membrane. Its subcellular location is the caveola. The protein resides in the cell junction. It is found in the adherens junction. Regulates the morphogenesis and endocytosis of caveolae. Lipid-binding protein that is able to promote the tubulation of the phosphatidic acid-containing membranes it preferentially binds. Plays a role in intracellular vesicle-mediated transport. Involved in the endocytosis of cell-surface receptors like the EGF receptor, contributing to its internalization in the absence of EGF stimulus. Essential for endothelial organization in sprouting angiogenesis, modulates CDH5-based junctions. Facilitates endothelial front-rear polarity during migration by recruiting EHD4 and MICALL1 to asymmetric adherens junctions between leader and follower cells. The chain is Protein kinase C and casein kinase substrate in neurons protein 2 (Pacsin2) from Mus musculus (Mouse).